A 304-amino-acid chain; its full sequence is UDP-N-acetylenolpyruvoylglucosamine reductase (304 aa).

An FAD-binding PCMH-type domain is found at 34–198 (IGGKADFLVW…LEVVFALQPG (165 aa)). R177 is a catalytic residue. S227 serves as the catalytic Proton donor. The active site involves E297.

Belongs to the MurB family. The cofactor is FAD.

It localises to the cytoplasm. The catalysed reaction is UDP-N-acetyl-alpha-D-muramate + NADP(+) = UDP-N-acetyl-3-O-(1-carboxyvinyl)-alpha-D-glucosamine + NADPH + H(+). The protein operates within cell wall biogenesis; peptidoglycan biosynthesis. Cell wall formation. The sequence is that of UDP-N-acetylenolpyruvoylglucosamine reductase from Geobacillus thermodenitrificans (strain NG80-2).